We begin with the raw amino-acid sequence, 384 residues long: N-acetylneuraminate epimerase (384 aa).

Positions M1 to A29 are cleaved as a signal peptide. 7 Kelch repeats span residues V51–N95, K97–N149, T151–Y184, N185–N230, L233–A282, Q304–D353, and V355–K384. Residue E239 is the Proton acceptor of the active site.

It belongs to the NanM family. As to quaternary structure, homodimer.

The protein localises to the periplasm. It catalyses the reaction N-acetyl-alpha-neuraminate = N-acetyl-beta-neuraminate. Functionally, converts alpha-N-acetylneuranimic acid (Neu5Ac) to the beta-anomer, accelerating the equilibrium between the alpha- and beta-anomers. Probably facilitates sialidase-negative bacteria to compete successfully for limited amounts of extracellular Neu5Ac, which is likely taken up in the beta-anomer. In addition, the rapid removal of sialic acid from solution might be advantageous to the bacterium to damp down host responses. In Salmonella typhi, this protein is N-acetylneuraminate epimerase.